Reading from the N-terminus, the 376-residue chain is MSFTFNWPRFSDQFHYDAMQMLNTALNKGNKPPIIADKIEVVELEMGTQPPELEIRDIGDLTVDQFRGIFRLTYAGDAHLVLKTKVQANPLNHKQPDIHLMVGSGGMLAAKQPLVVPMLLRLSHFRLSSYVVLVVSKQKGITLVFKTDPLQNVDINSTFDSIAVIQKFIQREIEGQLRQMFREDLPGIIHRLSQQWVKAKVEAPYLSKHPPPPIPPEEISEPGDYGEEGEFPFGSPPNHHSLDPDPKIVLRPSLNNASIHQLSTLSHSNHTLSPYTRSLSHFTVRSVPPRGIGPSGLSASFERQPVKAKRKRTYRLGGRKPPPESVPAVPDSPERASSPIPPSEFDESDMDRYFRSYDDHSRPPNIRQYRSHLHPS.

The region spanning 1–194 is the SMP-LTD domain; it reads MSFTFNWPRF…LPGIIHRLSQ (194 aa). Disordered regions lie at residues 207–249 and 286–376; these read SKHP…PKIV and SVPP…LHPS. Acidic residues predominate over residues 218–230; the sequence is EISEPGDYGEEGE. Over residues 306 to 318 the composition is skewed to basic residues; that stretch reads VKAKRKRTYRLGG. Residues 350-362 are compositionally biased toward basic and acidic residues; sequence MDRYFRSYDDHSR.

This sequence belongs to the MDM34 family. As to quaternary structure, component of the ER-mitochondria encounter structure (ERMES) or MDM complex, composed of MMM1, MDM10, MDM12 and MDM34.

It is found in the mitochondrion outer membrane. In terms of biological role, component of the ERMES/MDM complex, which serves as a molecular tether to connect the endoplasmic reticulum (ER) and mitochondria. Components of this complex are involved in the control of mitochondrial shape and protein biogenesis, and function in nonvesicular lipid trafficking between the ER and mitochondria. MDM34 is required for the interaction of the ER-resident membrane protein MMM1 and the outer mitochondrial membrane-resident beta-barrel protein MDM10. The polypeptide is Mitochondrial distribution and morphology protein 34 (Laccaria bicolor (strain S238N-H82 / ATCC MYA-4686) (Bicoloured deceiver)).